The primary structure comprises 294 residues: RAB7A-interacting MON1-CCZ1 complex subunit 1 (294 aa).

Ala2 bears the N-acetylalanine mark.

This sequence belongs to the RIMOC1 family. As to quaternary structure, interacts with the MON1A-CCZ1B complex. Interacts with GDP-bound RAB7A and promotes its interaction with the MON1A-CCZ1B complex.

It localises to the cytoplasm. The protein localises to the cytosol. Plays an important role in the removal of damaged mitochondria via mitophagy by controlling the stability and localization of RAB7A. Required for the recruitment of RAB7A and ATG9A vesicles to damaged mitochondria and promotes the stability of RAB7A by inhibiting its proteasomal degradation during mitophagy. The protein is RAB7A-interacting MON1-CCZ1 complex subunit 1 of Mus musculus (Mouse).